Here is a 657-residue protein sequence, read N- to C-terminus: N-acetylgalactosaminyltransferase 7 (657 aa).

Over 1 to 6 (MRLKIG) the chain is Cytoplasmic. A helical; Signal-anchor for type II membrane protein transmembrane segment spans residues 7 to 29 (FILRSLLVVGSFLGLVVLWSSLS). 2 disordered regions span residues 30–66 (SRPDDQSPLSRMREDRDVNNPLPNRGGNGLAPGDDRF) and 83–105 (ESIRRKNKAKNEQERHAGGDSQR). Topologically, residues 30-657 (SRPDDQSPLS…KWEMNNIHSV (628 aa)) are lumenal. Disulfide bonds link Cys-197–Cys-435, Cys-426–Cys-507, Cys-545–Cys-562, Cys-585–Cys-600, and Cys-625–Cys-640. The segment at 206-317 (LLTSSVVIVF…VNWYAPLVAP (112 aa)) is catalytic subdomain A. Residues Asp-247 and Arg-277 each contribute to the substrate site. Positions 301 and 303 each coordinate Mn(2+). The tract at residues 381 to 443 (PYRSPAMAGG…PCSRVGHIYR (63 aa)) is catalytic subdomain B. Trp-412 lines the substrate pocket. His-440 lines the Mn(2+) pocket. Arg-443 lines the substrate pocket. One can recognise a Ricin B-type lectin domain in the interval 532-652 (VEWGEIRGLE…SKMTQKWEMN (121 aa)).

This sequence belongs to the glycosyltransferase 2 family. GalNAc-T subfamily. The cofactor is Mn(2+). As to expression, highly expressed in sublingual gland. Expressed at lower level in stomach, small intestiine and colon.

It is found in the golgi apparatus membrane. It carries out the reaction L-seryl-[protein] + UDP-N-acetyl-alpha-D-galactosamine = a 3-O-[N-acetyl-alpha-D-galactosaminyl]-L-seryl-[protein] + UDP + H(+). It catalyses the reaction L-threonyl-[protein] + UDP-N-acetyl-alpha-D-galactosamine = a 3-O-[N-acetyl-alpha-D-galactosaminyl]-L-threonyl-[protein] + UDP + H(+). It participates in protein modification; protein glycosylation. In terms of biological role, glycopeptide transferase involved in O-linked oligosaccharide biosynthesis, which catalyzes the transfer of an N-acetyl-D-galactosamine residue to an already glycosylated peptide. In contrast to other proteins of the family, it does not act as a peptide transferase that transfers GalNAc onto serine or threonine residue on the protein receptor, but instead requires the prior addition of a GalNAc on a peptide before adding additional GalNAc moieties. Some peptide transferase activity is however not excluded, considering that its appropriate peptide substrate may remain unidentified. In Mus musculus (Mouse), this protein is N-acetylgalactosaminyltransferase 7 (Galnt7).